The chain runs to 215 residues: Probable phosphoglycerate mutase GpmB (215 aa).

Residues 8–15, 21–22, Arg58, Arg60, 82–85, and 151–152 each bind substrate; these read RHGESEWN, QG, ELHM, and GI. His9 serves as the catalytic Tele-phosphohistidine intermediate. Glu82 functions as the Proton donor/acceptor in the catalytic mechanism.

This sequence belongs to the phosphoglycerate mutase family. GpmB subfamily.

The enzyme catalyses (2R)-2-phosphoglycerate = (2R)-3-phosphoglycerate. Its pathway is carbohydrate degradation; glycolysis; pyruvate from D-glyceraldehyde 3-phosphate: step 3/5. The polypeptide is Probable phosphoglycerate mutase GpmB (Photorhabdus laumondii subsp. laumondii (strain DSM 15139 / CIP 105565 / TT01) (Photorhabdus luminescens subsp. laumondii)).